Here is a 333-residue protein sequence, read N- to C-terminus: Serine/threonine-protein phosphatase 4 catalytic subunit 1 (333 aa).

Positions 1–29 are disordered; the sequence is MALAVADTQNETFARSESPTSGPSDQLST. Over residues 7–27 the composition is skewed to polar residues; sequence DTQNETFARSESPTSGPSDQL. 4 residues coordinate Mn(2+): aspartate 79, histidine 81, aspartate 107, and asparagine 139. Histidine 140 (proton donor) is an active-site residue. The Mn(2+) site is built by histidine 189 and histidine 264. The residue at position 333 (leucine 333) is a Leucine methyl ester.

This sequence belongs to the PPP phosphatase family. PP-4 (PP-X) subfamily. In terms of assembly, serine/threonine-protein phosphatase 4 (PP4) occurs in different assemblies of the catalytic and one or more regulatory subunits. The regulatory subunits are likely to be ppfr-1, ppfr-2, ppfr-4 and smk-1. Interacts with mei-1. Mn(2+) serves as cofactor. Methylation at the C-terminal Leu-333 is critical for interactions with regulatory subunits.

The protein localises to the cytoplasm. It is found in the cytoskeleton. It localises to the microtubule organizing center. Its subcellular location is the centrosome. It carries out the reaction O-phospho-L-seryl-[protein] + H2O = L-seryl-[protein] + phosphate. The catalysed reaction is O-phospho-L-threonyl-[protein] + H2O = L-threonyl-[protein] + phosphate. Functionally, protein phosphatase which plays an essential role in meiosis and in early embryonic mitosis. During spermatocyte meiosis and the first embryonic mitosis, regulates centrosome maturation, and thus spindle formation, by recruiting some of the components of the pericentriolar material (PCM). During oocyte meiosis I, regulates meiotic chromosome dynamics including synapsis-independent chromosome pairing, restriction of synapsis to homologous chromosomes, programmed DNA double-strand break initiation and crossover formation resulting in chiasma formation. During oocyte meiosis II and probably together with regulatory subunit ppfr-1, may regulate microtubule severing by dephosphorylating and activating mei-1, a component of the katanin microtubule severing complex. The chain is Serine/threonine-protein phosphatase 4 catalytic subunit 1 (pph-4.1) from Caenorhabditis briggsae.